We begin with the raw amino-acid sequence, 710 residues long: Putative transmembrane protein ORF710 (710 aa).

Positions 1 to 33 are cleaved as a signal peptide; it reads MKLDRKKKRLLLKTIFSIVILILPLTFLHPTNS. 3 helical membrane-spanning segments follow: residues 41-61, 76-95, and 689-709; these read VPIQ…TAPL, YGTL…VVWY, and VAIV…IFAI.

It localises to the host membrane. In Acidianus convivator (ATV), this protein is Putative transmembrane protein ORF710.